We begin with the raw amino-acid sequence, 370 residues long: Cap-specific mRNA (nucleoside-2'-O-)-methyltransferase 1 (370 aa).

A RrmJ-type SAM-dependent 2'-O-MTase domain is found at alanine 87–isoleucine 294. S-adenosyl-L-methionine contacts are provided by glycine 130 and aspartate 207. Catalysis depends on lysine 248, which acts as the Proton acceptor.

Component of a complex composed of CBF5, GAR1, NHP2, MTR1, NOP10 and Tb11.01.8210.

Its subcellular location is the nucleus. It carries out the reaction a 5'-end (N(7)-methyl 5'-triphosphoguanosine)-ribonucleoside in mRNA + S-adenosyl-L-methionine = a 5'-end (N(7)-methyl 5'-triphosphoguanosine)-(2'-O-methyl-ribonucleoside) in mRNA + S-adenosyl-L-homocysteine + H(+). Functionally, S-adenosyl-L-methionine-dependent methyltransferase that mediates RNA cap1 2'-O-ribose methylation to the 5'-cap structure of spliced leader and U1 small nuclear RNAs. Methylates the ribose of the first nucleotide of a m(7)GpppG-capped RNA to produce m(7)GpppNmp (cap1). Cap1 modification is linked to higher levels of translation. Recognizes a guanosine cap on RNA independent of its N(7) methylation status. This is Cap-specific mRNA (nucleoside-2'-O-)-methyltransferase 1 (MTR1) from Trypanosoma brucei brucei (strain 927/4 GUTat10.1).